We begin with the raw amino-acid sequence, 248 residues long: Probable transcriptional regulatory protein Acel_1346 (248 aa).

This sequence belongs to the TACO1 family.

It is found in the cytoplasm. In Acidothermus cellulolyticus (strain ATCC 43068 / DSM 8971 / 11B), this protein is Probable transcriptional regulatory protein Acel_1346.